A 329-amino-acid chain; its full sequence is Beta-ketoacyl-[acyl-carrier-protein] synthase III (329 aa).

Catalysis depends on residues Cys123 and His256. The tract at residues 257–261 (QANVR) is ACP-binding. The active site involves Asn286.

The protein belongs to the thiolase-like superfamily. FabH family. Homodimer.

Its subcellular location is the cytoplasm. The enzyme catalyses malonyl-[ACP] + acetyl-CoA + H(+) = 3-oxobutanoyl-[ACP] + CO2 + CoA. It participates in lipid metabolism; fatty acid biosynthesis. Functionally, catalyzes the condensation reaction of fatty acid synthesis by the addition to an acyl acceptor of two carbons from malonyl-ACP. Catalyzes the first condensation reaction which initiates fatty acid synthesis and may therefore play a role in governing the total rate of fatty acid production. Possesses both acetoacetyl-ACP synthase and acetyl transacylase activities. Its substrate specificity determines the biosynthesis of branched-chain and/or straight-chain of fatty acids. In Bordetella parapertussis (strain 12822 / ATCC BAA-587 / NCTC 13253), this protein is Beta-ketoacyl-[acyl-carrier-protein] synthase III.